We begin with the raw amino-acid sequence, 644 residues long: Exoribonuclease 2 (644 aa).

In terms of domain architecture, RNB spans 189 to 516 (REDLTALNFV…NHRLLKAMIT (328 aa)). One can recognise an S1 motif domain in the interval 561-643 (DTRFTAEIID…ETRNVIARPV (83 aa)).

Belongs to the RNR ribonuclease family. RNase II subfamily.

The protein resides in the cytoplasm. The catalysed reaction is Exonucleolytic cleavage in the 3'- to 5'-direction to yield nucleoside 5'-phosphates.. Its function is as follows. Involved in mRNA degradation. Hydrolyzes single-stranded polyribonucleotides processively in the 3' to 5' direction. In Yersinia pestis bv. Antiqua (strain Antiqua), this protein is Exoribonuclease 2.